Reading from the N-terminus, the 358-residue chain is Trace amine-associated receptor 7d (358 aa).

The Extracellular portion of the chain corresponds to 1–47 (MRVDDDRFPWDQDSILSRDLLSASSLQLCYENLNRSCVRSPYSPGPR). Asparagine 34 is a glycosylation site (N-linked (GlcNAc...) asparagine). Intrachain disulfides connect cysteine 37–cysteine 201 and cysteine 120–cysteine 205. Residues 48-68 (LILYAVFGFGAVLAVCGNLMV) form a helical membrane-spanning segment. At 69-83 (MTSILHFRQLHSPAN) the chain is on the cytoplasmic side. Residues 84 to 104 (FLVASLACADFLVGLTVMPFS) form a helical membrane-spanning segment. The Extracellular portion of the chain corresponds to 105 to 122 (MVRSVEGCWYFGDTYCKL). A helical transmembrane segment spans residues 123–143 (HTCFDVSFCYCSLFHLCFISV). Over 144-166 (DRYIAVSDPLIYPTRFTASVSGK) the chain is Cytoplasmic. The chain crosses the membrane as a helical span at residues 167 to 187 (CITFSWLLSIIYGFPLIYTGA). Over 188 to 212 (SEAGLEDLVSALTCVGGCQIPMNQK) the chain is Extracellular. Residues 213–233 (FVLINFLLFLVPTLVMMTVYS) form a helical membrane-spanning segment. At 234–274 (KIFLIARQQAQNIEKMRKQTARASESYKDRVCKRERKAAKT) the chain is on the cytoplasmic side. A helical membrane pass occupies residues 275–295 (LGIAVAAFLLSWLPYFIDSII). The Extracellular segment spans residues 296 to 309 (DAFLGFITPTYVYE). The helical transmembrane segment at 310–333 (ILIWIVYYNSSMNPLIYAFFYPWF) threads the bilayer. Over 334–358 (RKATKLIVTGKILRENSSTINLFPE) the chain is Cytoplasmic.

It belongs to the G-protein coupled receptor 1 family.

It localises to the cell membrane. Functionally, olfactory receptor specific for N,N-dimethylalkylamines trace amines, such as N,N-dimethylcyclohexylamine. Trace amine compounds are enriched in animal body fluids and act on trace amine-associated receptors (TAARs) to elicit both intraspecific and interspecific innate behaviors. Ligand-binding causes a conformation change that triggers signaling via G(s)-class of G alpha proteins (GNAL or GNAS). This is Trace amine-associated receptor 7d from Rattus norvegicus (Rat).